We begin with the raw amino-acid sequence, 198 residues long: MILYRIGEIIHKHNSNIIFESQGIGYSLILPDPERVEIKQKCKLYLFEIKNEYQYATYAFKDFKERLLFVDLISLNGIGPRAAFNILNFGFEKVVALIAEGNAEALIEIPYLNPRMARLIVAELQAKWSKMISPKDAAKINETTNTLSEVKETLKMVGFKTKQIDGALSKISSTDDVEKMIEEAIKLMSTQNYESATA.

The segment at 1-61 (MILYRIGEII…EYQYATYAFK (61 aa)) is domain I. A domain II region spans residues 62 to 139 (DFKERLLFVD…KMISPKDAAK (78 aa)). Positions 140 to 144 (INETT) are flexible linker. Residues 144-198 (TNTLSEVKETLKMVGFKTKQIDGALSKISSTDDVEKMIEEAIKLMSTQNYESATA) form a domain III region.

Belongs to the RuvA family. In terms of assembly, homotetramer. Forms an RuvA(8)-RuvB(12)-Holliday junction (HJ) complex. HJ DNA is sandwiched between 2 RuvA tetramers; dsDNA enters through RuvA and exits via RuvB. An RuvB hexamer assembles on each DNA strand where it exits the tetramer. Each RuvB hexamer is contacted by two RuvA subunits (via domain III) on 2 adjacent RuvB subunits; this complex drives branch migration. In the full resolvosome a probable DNA-RuvA(4)-RuvB(12)-RuvC(2) complex forms which resolves the HJ.

The protein localises to the cytoplasm. Its function is as follows. The RuvA-RuvB-RuvC complex processes Holliday junction (HJ) DNA during genetic recombination and DNA repair, while the RuvA-RuvB complex plays an important role in the rescue of blocked DNA replication forks via replication fork reversal (RFR). RuvA specifically binds to HJ cruciform DNA, conferring on it an open structure. The RuvB hexamer acts as an ATP-dependent pump, pulling dsDNA into and through the RuvAB complex. HJ branch migration allows RuvC to scan DNA until it finds its consensus sequence, where it cleaves and resolves the cruciform DNA. The protein is Holliday junction branch migration complex subunit RuvA of Mycoplasmopsis agalactiae (strain NCTC 10123 / CIP 59.7 / PG2) (Mycoplasma agalactiae).